Reading from the N-terminus, the 339-residue chain is D-alanine--D-alanine ligase (339 aa).

Positions 126–333 (KQVLASVGMP…YSELVTRLVE (208 aa)) constitute an ATP-grasp domain. 158–213 (AGELGYPLFVKPANLGSSVGISKVSGPGELERALDLAFSLGRRVILEAMTAHKPRE) is a binding site for ATP. 3 residues coordinate Mg(2+): Asp-286, Glu-300, and Asn-302.

This sequence belongs to the D-alanine--D-alanine ligase family. Mg(2+) is required as a cofactor. Requires Mn(2+) as cofactor.

It localises to the cytoplasm. The enzyme catalyses 2 D-alanine + ATP = D-alanyl-D-alanine + ADP + phosphate + H(+). It functions in the pathway cell wall biogenesis; peptidoglycan biosynthesis. Cell wall formation. The protein is D-alanine--D-alanine ligase of Deinococcus geothermalis (strain DSM 11300 / CIP 105573 / AG-3a).